A 78-amino-acid chain; its full sequence is UPF0270 protein PC1_3850 (78 aa).

Belongs to the UPF0270 family.

This is UPF0270 protein PC1_3850 from Pectobacterium carotovorum subsp. carotovorum (strain PC1).